We begin with the raw amino-acid sequence, 409 residues long: Lipoyl synthase, mitochondrial (409 aa).

The interval 21 to 41 (QQQVPPSEEPRNESGAANPPL) is disordered. Residues Cys125, Cys130, Cys136, Cys159, Cys163, Cys166, and Ser375 each contribute to the [4Fe-4S] cluster site. A Radical SAM core domain is found at 142 to 364 (EEGDGTATAT…EKEALDMGFL (223 aa)).

Belongs to the radical SAM superfamily. Lipoyl synthase family. It depends on [4Fe-4S] cluster as a cofactor.

The protein localises to the mitochondrion. It catalyses the reaction [[Fe-S] cluster scaffold protein carrying a second [4Fe-4S](2+) cluster] + N(6)-octanoyl-L-lysyl-[protein] + 2 oxidized [2Fe-2S]-[ferredoxin] + 2 S-adenosyl-L-methionine + 4 H(+) = [[Fe-S] cluster scaffold protein] + N(6)-[(R)-dihydrolipoyl]-L-lysyl-[protein] + 4 Fe(3+) + 2 hydrogen sulfide + 2 5'-deoxyadenosine + 2 L-methionine + 2 reduced [2Fe-2S]-[ferredoxin]. The protein operates within protein modification; protein lipoylation via endogenous pathway; protein N(6)-(lipoyl)lysine from octanoyl-[acyl-carrier-protein]: step 2/2. In terms of biological role, catalyzes the radical-mediated insertion of two sulfur atoms into the C-6 and C-8 positions of the octanoyl moiety bound to the lipoyl domains of lipoate-dependent enzymes, thereby converting the octanoylated domains into lipoylated derivatives. The chain is Lipoyl synthase, mitochondrial from Trypanosoma brucei gambiense (strain MHOM/CI/86/DAL972).